The primary structure comprises 106 residues: Nucleoid-associated protein Smlt1015 (106 aa).

The tract at residues 81-106 (IDAESKSKMGSATAGMQLPPGMKLPF) is disordered.

The protein belongs to the YbaB/EbfC family. Homodimer.

The protein resides in the cytoplasm. The protein localises to the nucleoid. In terms of biological role, binds to DNA and alters its conformation. May be involved in regulation of gene expression, nucleoid organization and DNA protection. In Stenotrophomonas maltophilia (strain K279a), this protein is Nucleoid-associated protein Smlt1015.